A 283-amino-acid polypeptide reads, in one-letter code: Formamidopyrimidine-DNA glycosylase (283 aa).

Proline 2 serves as the catalytic Schiff-base intermediate with DNA. The active-site Proton donor is glutamate 3. Lysine 60 (proton donor; for beta-elimination activity) is an active-site residue. Residues histidine 100, arginine 119, and arginine 164 each contribute to the DNA site. An FPG-type zinc finger spans residues 249-283 (WVYGRENKPCRKCGVKILKAKVAGRGTHWCPNCQK). Arginine 273 serves as the catalytic Proton donor; for delta-elimination activity.

This sequence belongs to the FPG family. As to quaternary structure, monomer. It depends on Zn(2+) as a cofactor.

The catalysed reaction is Hydrolysis of DNA containing ring-opened 7-methylguanine residues, releasing 2,6-diamino-4-hydroxy-5-(N-methyl)formamidopyrimidine.. The enzyme catalyses 2'-deoxyribonucleotide-(2'-deoxyribose 5'-phosphate)-2'-deoxyribonucleotide-DNA = a 3'-end 2'-deoxyribonucleotide-(2,3-dehydro-2,3-deoxyribose 5'-phosphate)-DNA + a 5'-end 5'-phospho-2'-deoxyribonucleoside-DNA + H(+). Functionally, involved in base excision repair of DNA damaged by oxidation or by mutagenic agents. Acts as a DNA glycosylase that recognizes and removes damaged bases. Has a preference for oxidized purines, such as 7,8-dihydro-8-oxoguanine (8-oxoG). Has AP (apurinic/apyrimidinic) lyase activity and introduces nicks in the DNA strand. Cleaves the DNA backbone by beta-delta elimination to generate a single-strand break at the site of the removed base with both 3'- and 5'-phosphates. The chain is Formamidopyrimidine-DNA glycosylase from Prochlorococcus marinus (strain SARG / CCMP1375 / SS120).